The following is a 248-amino-acid chain: Probable transcriptional regulatory protein ECH_0704 (248 aa).

Residues 1-21 (MAGHSQFANIKHRKGAQDAKR) are disordered.

The protein belongs to the TACO1 family.

It localises to the cytoplasm. In Ehrlichia chaffeensis (strain ATCC CRL-10679 / Arkansas), this protein is Probable transcriptional regulatory protein ECH_0704.